The chain runs to 183 residues: Transmembrane protein 252 (183 aa).

2 helical membrane-spanning segments follow: residues 8-28 and 39-59; these read ILCALSLLTGFLMICLGGFFI and LVVAYVLLPMGFVILLSGIFW.

The protein resides in the membrane. The polypeptide is Transmembrane protein 252 (Tmem252) (Mus musculus (Mouse)).